A 606-amino-acid polypeptide reads, in one-letter code: MANPKEKTPMCLVNELARFNRIQPQYKLLNEKGPAHAKIFTVQLCLGNQVWESEGSSIKKAQHSTATKALAESSLPRPPPRSPKADSNSNPGSITPTVELNGLAMKRGEPAIYRPLDPKPIPNYRANYNFRGMFNQRYHYPVPKVFYVQLTVGNNEFIGEGRTRQAARHNAAMKALQALKNEPIPERPPQCSEEKKETEENSDASKSEISLVYEIALKRNLPVNFEVLKESGPPHMKSFLTRVTVGEFSAEGEGNSKKLSKKRAALSILQELKKLPVLPVVEKPKVHYKKRPKTILKTGPEYGQGMNPISRLAQIQQAKKEKEPEYMLLSERGMPRRREFIMQVKVGTEVTTGTGPNKKVAKRNAAEAMLLQLGYKASTPLQNTPEKMDNKGWNGQRAAFPETTSNTQKGILHLSPDVYQEMEASRNKGVPGAPGNFPTAKEIGQGSAGPFCTPSVGNTATIAKELLLSGTSPTAEALVLKGKAPALACGSIQPSQQLEYLAHIQGFQVQYSDRQTDKEFMTYLTLSPVQMTFHGIGSSIPASHDQAALSALKQLSEQGLDPVDGPIKVENGSCDIQAKRLAERTESKPTNSGTTAQDCKDSKAVV.

DRBM domains follow at residues 8-75 (TPMC…ESSL) and 95-181 (TPTV…ALKN). 2 disordered regions span residues 57-97 (SIKK…ITPT) and 177-205 (QALKNEPIPERPPQCSEEKKETEENSDAS). The span at 85–97 (ADSNSNPGSITPT) shows a compositional bias: polar residues. Over residues 192-205 (SEEKKETEENSDAS) the composition is skewed to basic and acidic residues. DRBM domains lie at 207–274 (SEIS…ELKK), 307–375 (NPIS…QLGY), and 493–557 (QPSQ…QLSE). Positions 580-606 (RLAERTESKPTNSGTTAQDCKDSKAVV) are disordered. Over residues 588-597 (KPTNSGTTAQ) the composition is skewed to polar residues.

In terms of biological role, RNA-binding protein required for the microtubule-dependent transport of RNAs within polarized cell types. The sequence is that of Double-stranded RNA-binding protein Staufen homolog 2 (stau2) from Danio rerio (Zebrafish).